Reading from the N-terminus, the 357-residue chain is Putative DNA directed RNA polymerase subunit R470 (357 aa).

The protein belongs to the archaeal Rpo11/eukaryotic RPB11/RPC19 RNA polymerase subunit family.

It is found in the virion. The enzyme catalyses RNA(n) + a ribonucleoside 5'-triphosphate = RNA(n+1) + diphosphate. This Acanthamoeba polyphaga mimivirus (APMV) protein is Putative DNA directed RNA polymerase subunit R470.